The sequence spans 260 residues: Carbonic anhydrase 2 (260 aa).

Position 2 is an N-acetylserine (S2). S2 is subject to Phosphoserine. The region spanning H3 to P259 is the Alpha-carbonic anhydrase domain. H64 acts as the Proton donor/acceptor in catalysis. 3 residues coordinate Zn(2+): H94, H96, and H119. Residues S165 and S172 each carry the phosphoserine modification. Position 198-199 (T198–T199) interacts with substrate.

It belongs to the alpha-carbonic anhydrase family. As to quaternary structure, interacts with SLC4A4. Interaction with SLC4A7 regulates SLC4A7 transporter activity. Zn(2+) serves as cofactor.

The protein resides in the cytoplasm. It localises to the cell membrane. The enzyme catalyses hydrogencarbonate + H(+) = CO2 + H2O. It catalyses the reaction urea = cyanamide + H2O. Its activity is regulated as follows. Inhibited by acetazolamide. Its function is as follows. Catalyzes the reversible hydration of carbon dioxide. Can also hydrate cyanamide to urea. Involved in the regulation of fluid secretion into the anterior chamber of the eye. Essential for bone resorption and osteoclast differentiation. Contributes to intracellular pH regulation in the duodenal upper villous epithelium during proton-coupled peptide absorption. Stimulates the chloride-bicarbonate exchange activity of SLC26A6. The chain is Carbonic anhydrase 2 (CA2) from Bos taurus (Bovine).